Here is a 147-residue protein sequence, read N- to C-terminus: Prefoldin subunit alpha (147 aa).

This sequence belongs to the prefoldin alpha subunit family. As to quaternary structure, heterohexamer of two alpha and four beta subunits.

It localises to the cytoplasm. Its function is as follows. Molecular chaperone capable of stabilizing a range of proteins. Seems to fulfill an ATP-independent, HSP70-like function in archaeal de novo protein folding. The protein is Prefoldin subunit alpha of Saccharolobus islandicus (strain M.16.27) (Sulfolobus islandicus).